The sequence spans 284 residues: GPN-loop GTPase 3 (284 aa).

GTP is bound at residue 13–18; the sequence is GSGKST. The short motif at 72-74 is the Gly-Pro-Asn (GPN)-loop; involved in dimer interface element; it reads GPN. 174-177 is a GTP binding site; it reads TKMD. The disordered stretch occupies residues 261-284; the sequence is KEPKEHEEESSSMFDEYFQERQNE.

It belongs to the GPN-loop GTPase family. In terms of assembly, heterodimer with GPN1. Binds to RNA polymerase II (RNAPII). Interacts directly with subunits RPB4 and RPB7 and the CTD of RPB1.

Small GTPase required for proper localization of RNA polymerase II (RNAPII). May act at an RNAP assembly step prior to nuclear import. The polypeptide is GPN-loop GTPase 3 (Rattus norvegicus (Rat)).